The following is a 316-amino-acid chain: tRNA pseudouridine synthase B (316 aa).

Asp-47 serves as the catalytic Nucleophile.

This sequence belongs to the pseudouridine synthase TruB family. Type 1 subfamily.

The catalysed reaction is uridine(55) in tRNA = pseudouridine(55) in tRNA. Functionally, responsible for synthesis of pseudouridine from uracil-55 in the psi GC loop of transfer RNAs. The polypeptide is tRNA pseudouridine synthase B (Aliivibrio fischeri (strain ATCC 700601 / ES114) (Vibrio fischeri)).